A 775-amino-acid polypeptide reads, in one-letter code: Chondroitin sulfate synthase 2 (775 aa).

Topologically, residues 1 to 15 (MRASLLLSVLRPAGP) are cytoplasmic. The chain crosses the membrane as a helical; Signal-anchor for type II membrane protein span at residues 16–34 (VAVGISLGFTLSLLSVTWV). Topologically, residues 35 to 775 (EEPCGPGPPQ…LFEQEQGNST (741 aa)) are lumenal. Residues 37-100 (PCGPGPPQPG…YHPAQPGQAA (64 aa)) are disordered. Polar residues predominate over residues 54-66 (GNTNAARRPNSVQ). Residues asparagine 138 and asparagine 361 are each glycosylated (N-linked (GlcNAc...) asparagine). Aspartate 617 is an a divalent metal cation binding site.

The protein belongs to the chondroitin N-acetylgalactosaminyltransferase family. Interacts with PRKN. The cofactor is Mn(2+). It depends on Co(2+) as a cofactor. As to expression, ubiquitous. Highly expressed in pancreas, ovary, brain, heart, skeletal muscle, colon, kidney, liver, stomach, spleen and placenta. In terms of tissue distribution, expressed in brain, spleen, ovary, testis, lung and peripheral mononuclear cells. Also ubiquitous.

It localises to the golgi apparatus. The protein resides in the golgi stack membrane. It is found in the cytoplasm. Its subcellular location is the cytosol. The protein localises to the mitochondrion. It localises to the mitochondrion matrix. The enzyme catalyses 3-O-(beta-D-GlcA-(1-&gt;3)-beta-D-GalNAc-(1-&gt;4)-beta-D-GlcA-(1-&gt;3)-beta-D-Gal-(1-&gt;3)-beta-D-Gal-(1-&gt;4)-beta-D-Xyl)-L-seryl-[protein] + UDP-N-acetyl-alpha-D-galactosamine = 3-O-(beta-D-GalNAc-(1-&gt;4)-beta-D-GlcA-(1-&gt;3)-beta-D-GalNAc-(1-&gt;4)-beta-D-GlcA-(1-&gt;3)-beta-D-Gal-(1-&gt;3)-beta-D-Gal-(1-&gt;4)-beta-D-Xyl)-L-seryl-[protein] + UDP + H(+). It catalyses the reaction 3-O-{beta-D-GlcA-(1-&gt;3)-[beta-D-GalNAc-(1-&gt;4)-beta-D-GlcA-(1-&gt;3)](n)-beta-D-GalNAc-(1-&gt;4)-beta-D-GlcA-(1-&gt;3)-beta-D-Gal-(1-&gt;3)-beta-D-Gal-(1-&gt;4)-beta-D-Xyl}-L-seryl-[protein] + UDP-N-acetyl-alpha-D-galactosamine = 3-O-{[beta-D-GalNAc-(1-&gt;4)-beta-D-GlcA-(1-&gt;3)](n+1)-beta-D-GalNAc-(1-&gt;4)-beta-D-GlcA-(1-&gt;3)-beta-D-Gal-(1-&gt;3)-beta-D-Gal-(1-&gt;4)-beta-D-Xyl}-L-seryl-[protein] + UDP + H(+). It carries out the reaction 3-O-(beta-D-GalNAc-(1-&gt;4)-beta-D-GlcA-(1-&gt;3)-beta-D-Gal-(1-&gt;3)-beta-D-Gal-(1-&gt;4)-beta-D-Xyl)-L-seryl-[protein] + UDP-alpha-D-glucuronate = 3-O-(beta-D-GlcA-(1-&gt;3)-beta-D-GalNAc-(1-&gt;4)-beta-D-GlcA-(1-&gt;3)-beta-D-Gal-(1-&gt;3)-beta-D-Gal-(1-&gt;4)-beta-D-Xyl)-L-seryl-[protein] + UDP + H(+). The catalysed reaction is 3-O-{[beta-D-GalNAc-(1-&gt;4)-beta-D-GlcA-(1-&gt;3)](n)-beta-D-GalNAc-(1-&gt;4)-beta-D-GlcA-(1-&gt;3)-beta-D-Gal-(1-&gt;3)-beta-D-Gal-(1-&gt;4)-beta-D-Xyl}-L-seryl-[protein] + UDP-alpha-D-glucuronate = 3-O-{beta-D-GlcA-(1-&gt;3)-[beta-D-GalNAc-(1-&gt;4)-beta-D-GlcA-(1-&gt;3)](n)-beta-D-GalNAc-(1-&gt;4)-beta-D-GlcA-(1-&gt;3)-beta-D-Gal-(1-&gt;3)-beta-D-Gal-(1-&gt;4)-beta-D-Xyl}-L-seryl-[protein] + UDP + H(+). In terms of biological role, has both beta-1,3-glucuronic acid and beta-1,4-N-acetylgalactosamine transferase activity. Transfers glucuronic acid (GlcUA) from UDP-GlcUA and N-acetylgalactosamine (GalNAc) from UDP-GalNAc to the non-reducing end of the elongating chondroitin polymer. Seems to act as a specific activating factor for CHSY1 in chondroitin polymerization. Functionally, may facilitate PRKN transport into the mitochondria. In collaboration with PRKN, may enhance cell viability and protect cells from oxidative stress. This Homo sapiens (Human) protein is Chondroitin sulfate synthase 2.